Here is a 349-residue protein sequence, read N- to C-terminus: Cyclic amide hydrolase (349 aa).

The RU A stretch occupies residues 1–90 (MTSPEDTAGV…AVFVDDPASS (90 aa)). Arg38 is a substrate binding site. Residues 99-231 (GLSIGVTTTA…AAVLVMGNSP (133 aa)) form an RU B region. Lys149 is an active-site residue. Substrate contacts are provided by residues Arg176, 214–215 (SA), Lys311, and 330–331 (SG). The active-site Nucleophile is the Ser214. The segment at 237–349 (YRIGHGVLRD…GGGTVAVIAR (113 aa)) is RU C.

The protein belongs to the cyclic amide hydrolase (CyAH) family. In terms of assembly, homotetramer.

Functionally, cyclic amide hydrolase of unknown substrate specificity. Catalyzes the hydrolytic ring-opening of a cyclic amide. Does not act on cyanuric acid nor barbituric acid. The protein is Cyclic amide hydrolase of Rhodococcus sp.